A 595-amino-acid chain; its full sequence is Aspartate--tRNA ligase (595 aa).

Glu173 provides a ligand contact to L-aspartate. The interval 197-200 (QLFK) is aspartate. Arg219 contacts L-aspartate. ATP is bound by residues 219–221 (RDE) and Gln228. His449 contributes to the L-aspartate binding site. Glu483 lines the ATP pocket. Arg490 lines the L-aspartate pocket. ATP is bound at residue 535-538 (GLDR).

This sequence belongs to the class-II aminoacyl-tRNA synthetase family. Type 1 subfamily. As to quaternary structure, homodimer.

The protein localises to the cytoplasm. The catalysed reaction is tRNA(Asp) + L-aspartate + ATP = L-aspartyl-tRNA(Asp) + AMP + diphosphate. Its function is as follows. Catalyzes the attachment of L-aspartate to tRNA(Asp) in a two-step reaction: L-aspartate is first activated by ATP to form Asp-AMP and then transferred to the acceptor end of tRNA(Asp). This is Aspartate--tRNA ligase from Shewanella woodyi (strain ATCC 51908 / MS32).